The following is a 121-amino-acid chain: NAD(P)H-quinone oxidoreductase subunit M (121 aa).

The protein belongs to the complex I NdhM subunit family. NDH-1 can be composed of about 15 different subunits; different subcomplexes with different compositions have been identified which probably have different functions.

It is found in the cellular thylakoid membrane. The enzyme catalyses a plastoquinone + NADH + (n+1) H(+)(in) = a plastoquinol + NAD(+) + n H(+)(out). It carries out the reaction a plastoquinone + NADPH + (n+1) H(+)(in) = a plastoquinol + NADP(+) + n H(+)(out). Functionally, NDH-1 shuttles electrons from an unknown electron donor, via FMN and iron-sulfur (Fe-S) centers, to quinones in the respiratory and/or the photosynthetic chain. The immediate electron acceptor for the enzyme in this species is believed to be plastoquinone. Couples the redox reaction to proton translocation, and thus conserves the redox energy in a proton gradient. Cyanobacterial NDH-1 also plays a role in inorganic carbon-concentration. This is NAD(P)H-quinone oxidoreductase subunit M from Synechococcus sp. (strain JA-2-3B'a(2-13)) (Cyanobacteria bacterium Yellowstone B-Prime).